Reading from the N-terminus, the 512-residue chain is Cobyric acid synthase (512 aa).

The 201-residue stretch at 251–451 (ALDITVIRLP…IHGLFDSANF (201 aa)) folds into the GATase cobBQ-type domain. Residue Cys-332 is the Nucleophile of the active site. His-443 is an active-site residue.

The protein belongs to the CobB/CobQ family. CobQ subfamily.

Its pathway is cofactor biosynthesis; adenosylcobalamin biosynthesis. Functionally, catalyzes amidations at positions B, D, E, and G on adenosylcobyrinic A,C-diamide. NH(2) groups are provided by glutamine, and one molecule of ATP is hydrogenolyzed for each amidation. The sequence is that of Cobyric acid synthase from Photorhabdus laumondii subsp. laumondii (strain DSM 15139 / CIP 105565 / TT01) (Photorhabdus luminescens subsp. laumondii).